Here is a 461-residue protein sequence, read N- to C-terminus: Ornithine decarboxylase (461 aa).

Residue Lys-69 is modified to N6-(pyridoxal phosphate)lysine. Residues Ser-200, Gly-237, and 274–277 contribute to the pyridoxal 5'-phosphate site; that span reads EPGR. Ser-303 is modified (phosphoserine; by CK2). 331–332 lines the substrate pocket; the sequence is YD. Catalysis depends on Cys-360, which acts as the Proton donor; shared with dimeric partner. S-nitrosocysteine; in inhibited form is present on Cys-360. Residue Asp-361 coordinates substrate. Position 389 (Tyr-389) interacts with pyridoxal 5'-phosphate.

The protein belongs to the Orn/Lys/Arg decarboxylase class-II family. In terms of assembly, homodimer. Only the dimer is catalytically active, as the active sites are constructed of residues from both monomers. Does not form a heterodimer with AZIN2. It depends on pyridoxal 5'-phosphate as a cofactor. In terms of processing, S-Nitrosylation inhibits the enzyme. S-Nitrosylated in vitro on 4 cysteine residues.

The catalysed reaction is L-ornithine + H(+) = putrescine + CO2. It participates in amine and polyamine biosynthesis; putrescine biosynthesis via L-ornithine pathway; putrescine from L-ornithine: step 1/1. Inhibited by S-nitrosylation. Inhibited by antizymes (AZs) OAZ1, OAZ2 and OAZ3 in response to polyamine levels. AZs inhibit the assembly of the functional homodimer by binding to ODC monomers. Additionally, OAZ1 targets ODC monomers for ubiquitin-independent proteolytic destruction by the 26S proteasome. Inhibited by 1-amino-oxy-3-aminopropane (APA, an isosteric analog of putrescine). Irreversibly inhibited by alpha-difluoromethylornithine (DFMO). In terms of biological role, catalyzes the first and rate-limiting step of polyamine biosynthesis that converts ornithine into putrescine, which is the precursor for the polyamines, spermidine and spermine. Polyamines are essential for cell proliferation and are implicated in cellular processes, ranging from DNA replication to apoptosis. The protein is Ornithine decarboxylase (ODC1) of Homo sapiens (Human).